The following is a 211-amino-acid chain: Uracil phosphoribosyltransferase (211 aa).

5-phospho-alpha-D-ribose 1-diphosphate contacts are provided by residues Arg78, Arg103, and 130–138 (DPMLATGGT). Residues Ile195 and 200 to 202 (GDA) each bind uracil. A 5-phospho-alpha-D-ribose 1-diphosphate-binding site is contributed by Asp201.

This sequence belongs to the UPRTase family. Requires Mg(2+) as cofactor.

The catalysed reaction is UMP + diphosphate = 5-phospho-alpha-D-ribose 1-diphosphate + uracil. It functions in the pathway pyrimidine metabolism; UMP biosynthesis via salvage pathway; UMP from uracil: step 1/1. With respect to regulation, allosterically activated by GTP. In terms of biological role, catalyzes the conversion of uracil and 5-phospho-alpha-D-ribose 1-diphosphate (PRPP) to UMP and diphosphate. The protein is Uracil phosphoribosyltransferase of Arthrobacter sp. (strain FB24).